The chain runs to 103 residues: Small ribosomal subunit protein uS10c (103 aa).

It belongs to the universal ribosomal protein uS10 family. Part of the 30S ribosomal subunit.

Its subcellular location is the plastid. The protein resides in the chloroplast. Involved in the binding of tRNA to the ribosomes. This Trieres chinensis (Marine centric diatom) protein is Small ribosomal subunit protein uS10c.